The sequence spans 109 residues: uncharacterized protein (109 aa).

The N-terminal stretch at 1–23 is a signal peptide; it reads MKNYNFILISLFIIFFIILNISS. The N-linked (GlcNAc...) asparagine glycan is linked to asparagine 27. The interval 45-109 is disordered; it reads YQEYMENRTP…KKDQQNQQQN (65 aa). Low complexity predominate over residues 54–72; the sequence is PNEQQQQQQQQQNNNNPPQ. Over residues 94–103 the composition is skewed to basic and acidic residues; it reads KLKEKLKKDQ.

It is found in the secreted. This is an uncharacterized protein from Dictyostelium discoideum (Social amoeba).